Here is a 237-residue protein sequence, read N- to C-terminus: Ribonuclease PH (237 aa).

Residues Arg86 and 124–126 (GTR) each bind phosphate.

Belongs to the RNase PH family. In terms of assembly, homohexameric ring arranged as a trimer of dimers.

The catalysed reaction is tRNA(n+1) + phosphate = tRNA(n) + a ribonucleoside 5'-diphosphate. In terms of biological role, phosphorolytic 3'-5' exoribonuclease that plays an important role in tRNA 3'-end maturation. Removes nucleotide residues following the 3'-CCA terminus of tRNAs; can also add nucleotides to the ends of RNA molecules by using nucleoside diphosphates as substrates, but this may not be physiologically important. Probably plays a role in initiation of 16S rRNA degradation (leading to ribosome degradation) during starvation. The protein is Ribonuclease PH of Shewanella sediminis (strain HAW-EB3).